Reading from the N-terminus, the 277-residue chain is R-spondin-3 (277 aa).

An N-terminal signal peptide occupies residues 1–21; it reads MHLRLISCFFIILNFMEYIGS. FU repeat units follow at residues 35-86 and 92-135; these read PNVS…GYYG and INKC…GLEA. An N-linked (GlcNAc...) asparagine glycan is attached at asparagine 36. 11 disulfide bridges follow: cysteine 41-cysteine 48, cysteine 45-cysteine 54, cysteine 57-cysteine 76, cysteine 80-cysteine 95, cysteine 98-cysteine 105, cysteine 102-cysteine 111, cysteine 114-cysteine 125, cysteine 129-cysteine 142, cysteine 148-cysteine 190, cysteine 159-cysteine 166, and cysteine 199-cysteine 206. The region spanning 147–207 is the TSP type-1 domain; sequence HCEASEWSPW…TCIVQRKKCS (61 aa). The tract at residues 210–277 is disordered; that stretch reads ERGKKGRERK…QKSVSVSTVH (68 aa). Over residues 213–223 the composition is skewed to basic residues; sequence KKGRERKRKKL. Positions 232-245 are enriched in low complexity; sequence SSSSDSKGLESSIE.

Belongs to the R-spondin family. Interacts with the extracellular domain of FZD8 and LRP6. It however does not form a ternary complex with FZD8 and LRP6. Interacts with WNT1. Binds heparin. Interacts with LGR4, LGR5 and LGR6. As to expression, highly expressed in endothelial cells.

It is found in the secreted. In terms of biological role, activator of the canonical Wnt signaling pathway by acting as a ligand for LGR4-6 receptors, which acts as a key regulator of angiogenesis. Upon binding to LGR4-6 (LGR4, LGR5 or LGR6), LGR4-6 associate with phosphorylated LRP6 and frizzled receptors that are activated by extracellular Wnt receptors, triggering the canonical Wnt signaling pathway to increase expression of target genes. Also regulates the canonical Wnt/beta-catenin-dependent pathway and non-canonical Wnt signaling by acting as an inhibitor of ZNRF3, an important regulator of the Wnt signaling pathway. Acts as a ligand for frizzled FZD8 and LRP6. May negatively regulate the TGF-beta pathway. Acts as a key regulator of angiogenesis by controlling vascular stability and pruning: acts by activating the non-canonical Wnt signaling pathway in endothelial cells. Can also amplify Wnt signaling pathway independently of LGR4-6 receptors, possibly by acting as a direct antagonistic ligand to RNF43 and ZNRF3. In Mus musculus (Mouse), this protein is R-spondin-3 (Rspo3).